The primary structure comprises 151 residues: Ribosomal RNA large subunit methyltransferase H (151 aa).

S-adenosyl-L-methionine-binding positions include A101 and 119 to 124 (LSEMTF).

This sequence belongs to the RNA methyltransferase RlmH family. As to quaternary structure, homodimer.

Its subcellular location is the cytoplasm. It carries out the reaction pseudouridine(1915) in 23S rRNA + S-adenosyl-L-methionine = N(3)-methylpseudouridine(1915) in 23S rRNA + S-adenosyl-L-homocysteine + H(+). Functionally, specifically methylates the pseudouridine at position 1915 (m3Psi1915) in 23S rRNA. In Helicobacter pylori (strain G27), this protein is Ribosomal RNA large subunit methyltransferase H.